A 195-amino-acid chain; its full sequence is Large ribosomal subunit protein uL11m (195 aa).

It belongs to the universal ribosomal protein uL11 family. In terms of assembly, component of the mitochondrial ribosome large subunit (39S) which comprises a 16S rRNA and about 50 distinct proteins.

The protein localises to the mitochondrion. This chain is Large ribosomal subunit protein uL11m (mrpl-11), found in Caenorhabditis elegans.